The primary structure comprises 185 residues: Mu-like prophage FluMu protein gp16 (185 aa).

The protein to phage Mu protein gp16.

In Haemophilus influenzae (strain ATCC 51907 / DSM 11121 / KW20 / Rd), this protein is Mu-like prophage FluMu protein gp16.